The sequence spans 245 residues: Large ribosomal subunit protein uL2 (245 aa).

The interval 198-245 (VSHPHGGGSHKRPGKPTTVARTAPPGQKVGHIAARKTGRAKRRAATKR) is disordered. The segment covering 230–245 (AARKTGRAKRRAATKR) has biased composition (basic residues).

This sequence belongs to the universal ribosomal protein uL2 family. Part of the 50S ribosomal subunit. Forms a bridge to the 30S subunit in the 70S ribosome.

One of the primary rRNA binding proteins. Required for association of the 30S and 50S subunits to form the 70S ribosome, for tRNA binding and peptide bond formation. It has been suggested to have peptidyltransferase activity; this is somewhat controversial. Makes several contacts with the 16S rRNA in the 70S ribosome. This Korarchaeum cryptofilum (strain OPF8) protein is Large ribosomal subunit protein uL2.